The primary structure comprises 302 residues: HTH-type transcriptional regulator GbpR (302 aa).

Positions 1–56 (MSHLRMLVMIEEHGQVSAAAAAMNMTQPAASRMLSEMEAIVKSPLCQRASRGVVLT) constitute an HTH lysR-type domain. Positions 16 to 35 (VSAAAAAMNMTQPAASRMLS) form a DNA-binding region, H-T-H motif.

It belongs to the LysR transcriptional regulatory family.

Activator of the expression of chvE when bound to its inducer and represses its expression in the absence of inducer (L-arabinose, D-fucose or D-galactose). Negatively regulates its own expression. The chain is HTH-type transcriptional regulator GbpR (gbpR) from Rhizobium radiobacter (Agrobacterium tumefaciens).